The following is a 321-amino-acid chain: MTSKLDQLREITTVVADTGDIEAVARLKPVDCTTNPSIVLKALGTPMFADAIKEAVAWGKKQGGNPDAVSSAVADRLAISVGAALVKLVPGRVSTEVDADLSFDTEASLAKARSIIAAYKDRGIDRDRILIKLASTWEGIRAAEVLQKEGIDCNLTLLFSKAQAIACADAKVFLISPFVGRILDWYKKSTGKDYTAEEDPGVISVREIYNYYKANDIKTIVMGASFRNAGEIEALAGCDRLTISPALLDELSKDDGKLERKLSPESRKPDAKVSVDEKTFRWMMNEDAMATEKLAEGIRAFAKDLTTLRTMVQKELQLAAA.

K132 (schiff-base intermediate with substrate) is an active-site residue.

Belongs to the transaldolase family. Type 1 subfamily. Homodimer.

It localises to the cytoplasm. It catalyses the reaction D-sedoheptulose 7-phosphate + D-glyceraldehyde 3-phosphate = D-erythrose 4-phosphate + beta-D-fructose 6-phosphate. Its pathway is carbohydrate degradation; pentose phosphate pathway; D-glyceraldehyde 3-phosphate and beta-D-fructose 6-phosphate from D-ribose 5-phosphate and D-xylulose 5-phosphate (non-oxidative stage): step 2/3. Its function is as follows. Transaldolase is important for the balance of metabolites in the pentose-phosphate pathway. In Rhizobium etli (strain ATCC 51251 / DSM 11541 / JCM 21823 / NBRC 15573 / CFN 42), this protein is Transaldolase.